The following is a 124-amino-acid chain: Late histone H2A.2.1 (124 aa).

Residues 1–18 (MSGRGKGAKAKSKAKSRS) are compositionally biased toward basic residues. The interval 1-21 (MSGRGKGAKAKSKAKSRSSRA) is disordered. Residue serine 2 is modified to N-acetylserine. Serine 2 carries the phosphoserine modification. The residue at position 104 (glutamine 104) is an N5-methylglutamine. Lysine 119 participates in a covalent cross-link: Glycyl lysine isopeptide (Lys-Gly) (interchain with G-Cter in ubiquitin).

This sequence belongs to the histone H2A family. The nucleosome is a histone octamer containing two molecules each of H2A, H2B, H3 and H4 assembled in one H3-H4 heterotetramer and two H2A-H2B heterodimers. The octamer wraps approximately 147 bp of DNA. Monoubiquitination of Lys-119 gives a specific tag for epigenetic transcriptional repression. Post-translationally, phosphorylation of Ser-2 directly represses transcription.

Its subcellular location is the nucleus. It is found in the chromosome. In terms of biological role, core component of nucleosome. Nucleosomes wrap and compact DNA into chromatin, limiting DNA accessibility to the cellular machineries which require DNA as a template. Histones thereby play a central role in transcription regulation, DNA repair, DNA replication and chromosomal stability. DNA accessibility is regulated via a complex set of post-translational modifications of histones, also called histone code, and nucleosome remodeling. This is Late histone H2A.2.1 from Psammechinus miliaris (Green sea urchin).